The following is a 232-amino-acid chain: Ashwin (232 aa).

A phosphoserine mark is found at Ser-112, Ser-182, Ser-184, Ser-189, and Ser-193. The disordered stretch occupies residues 163 to 232; it reads KMEHNNNDTQ…KRKIQHVTWP (70 aa). 2 positions are modified to phosphothreonine: Thr-197 and Thr-198. Positions 206–224 are enriched in basic and acidic residues; that stretch reads APKEEAEATNHLKPPEVKR.

The protein belongs to the ashwin family. In terms of assembly, component of the tRNA-splicing ligase complex.

Its subcellular location is the nucleus. The sequence is that of Ashwin from Mus musculus (Mouse).